The following is a 236-amino-acid chain: MKLNISYPANGTQKSIDIDDEHKLRVFYEKRMGQEVEGDSVGDEFKGYIFKITGGNDKQGFPMKQGVMHPTRVRLLLSKGHSCYRPRRTGERKRKSVRGCIVAQDLSVLALSIVKQGDNEIEGLTDTTVPKRLGPKRANHIRKFFGLTKEDDVRDFVVRREVTKGDKTYTKAPKIQRLVTPQTLQRKRALKAKKVKNAQQQRDAAAEYAQLLAKRLHERKEERAEIKKKRAESLKN.

Belongs to the eukaryotic ribosomal protein eS6 family. In terms of assembly, component of the small ribosomal subunit. Mature ribosomes consist of a small (40S) and a large (60S) subunit. The 40S subunit contains about 32 different proteins and 1 molecule of RNA (18S). The 60S subunit contains 45 different proteins and 3 molecules of RNA (25S, 5.8S and 5S).

The protein resides in the cytoplasm. Functionally, component of the ribosome, a large ribonucleoprotein complex responsible for the synthesis of proteins in the cell. The small ribosomal subunit (SSU) binds messenger RNAs (mRNAs) and translates the encoded message by selecting cognate aminoacyl-transfer RNA (tRNA) molecules. The large subunit (LSU) contains the ribosomal catalytic site termed the peptidyl transferase center (PTC), which catalyzes the formation of peptide bonds, thereby polymerizing the amino acids delivered by tRNAs into a polypeptide chain. The nascent polypeptides leave the ribosome through a tunnel in the LSU and interact with protein factors that function in enzymatic processing, targeting, and the membrane insertion of nascent chains at the exit of the ribosomal tunnel. RPS6A is involved in nucleolar processing of pre-18S ribosomal RNA and ribosome assembly. The polypeptide is Small ribosomal subunit protein eS6 (RPS6A) (Candida albicans (strain SC5314 / ATCC MYA-2876) (Yeast)).